The primary structure comprises 124 residues: uncharacterized protein (124 aa).

The segment at 73-94 adopts a dksA C4-type; degenerate zinc-finger fold; the sequence is CEETGAPIPLAKLAVLPTARTA.

This is an uncharacterized protein from Bacillus subtilis (strain 168).